Here is a 216-residue protein sequence, read N- to C-terminus: 3-isopropylmalate dehydratase small subunit (216 aa).

This sequence belongs to the LeuD family. LeuD type 1 subfamily. Heterodimer of LeuC and LeuD.

The catalysed reaction is (2R,3S)-3-isopropylmalate = (2S)-2-isopropylmalate. It functions in the pathway amino-acid biosynthesis; L-leucine biosynthesis; L-leucine from 3-methyl-2-oxobutanoate: step 2/4. Functionally, catalyzes the isomerization between 2-isopropylmalate and 3-isopropylmalate, via the formation of 2-isopropylmaleate. This Acidovorax ebreus (strain TPSY) (Diaphorobacter sp. (strain TPSY)) protein is 3-isopropylmalate dehydratase small subunit.